The following is a 485-amino-acid chain: Glycogen synthase (485 aa).

Lys15 serves as a coordination point for ADP-alpha-D-glucose.

The protein belongs to the glycosyltransferase 1 family. Bacterial/plant glycogen synthase subfamily.

The enzyme catalyses [(1-&gt;4)-alpha-D-glucosyl](n) + ADP-alpha-D-glucose = [(1-&gt;4)-alpha-D-glucosyl](n+1) + ADP + H(+). It functions in the pathway glycan biosynthesis; glycogen biosynthesis. Functionally, synthesizes alpha-1,4-glucan chains using ADP-glucose. In Geobacillus thermodenitrificans (strain NG80-2), this protein is Glycogen synthase.